The sequence spans 89 residues: HssA/B-like protein 15 (89 aa).

It belongs to the hssA/B family.

This Dictyostelium discoideum (Social amoeba) protein is HssA/B-like protein 15 (hssl15).